Consider the following 491-residue polypeptide: MALQFQLNQTTPQTVTTDCVIVGIYADKTLSPTAKTLDAASGGRITALTARGDLTGKSGTSALLHDLNGVTAPRVLVVGLGEADKFGAGQYIKAVGDAVRALKDAPVTHALLTLSELPVKDRNAAWNIHQAVIAADHAAYRYTATLGTSRKKAEESGLITLAIHGQETSGLTLGQAIAEGVEYARALGNLPPNICTPAYLAETTAHFAATHPGATCEILDESNMEALGMGALLAVARGSANRPHLIVLKWNGGGDARPYVLVGKGITFDTGGVNLKTQGGIEEMKYDMCGGAAVIGTFVAAVKVRLPLNLIVIVPAVENAIDGNAYRPSDVITSMSGKTIEVGNTDAEGRLILCDALTYAERFKPEALIDVATLTGACMIALGRAATGLMTHHDDLANELLTAGEHVHDRAWRLPLWDEYQNLLDSTFADVYNIGGRWGGAITAGCFLSRFTEGQRWAHLDIAGSASNEGKRGMATGRPVGLLTQWLVDRC.

Mn(2+) contacts are provided by lysine 264 and aspartate 269. Lysine 276 is an active-site residue. Aspartate 287, aspartate 346, and glutamate 348 together coordinate Mn(2+). The active site involves arginine 350.

This sequence belongs to the peptidase M17 family. Mn(2+) is required as a cofactor.

It localises to the cytoplasm. The enzyme catalyses Release of an N-terminal amino acid, Xaa-|-Yaa-, in which Xaa is preferably Leu, but may be other amino acids including Pro although not Arg or Lys, and Yaa may be Pro. Amino acid amides and methyl esters are also readily hydrolyzed, but rates on arylamides are exceedingly low.. It catalyses the reaction Release of an N-terminal amino acid, preferentially leucine, but not glutamic or aspartic acids.. In terms of biological role, presumably involved in the processing and regular turnover of intracellular proteins. Catalyzes the removal of unsubstituted N-terminal amino acids from various peptides. This chain is Probable cytosol aminopeptidase, found in Xylella fastidiosa (strain M12).